Consider the following 93-residue polypeptide: Small ribosomal subunit protein mS33 (93 aa).

It belongs to the mitochondrion-specific ribosomal protein mS33 family. Component of the mitochondrial small ribosomal subunit (mt-SSU). Mature yeast 74S mitochondrial ribosomes consist of a small (37S) and a large (54S) subunit. The 37S small subunit contains a 15S ribosomal RNA (15S mt-rRNA) and at least 32 different proteins. The 54S large subunit contains a 21S rRNA (21S mt-rRNA) and at least 45 different proteins.

Its subcellular location is the mitochondrion. Its function is as follows. Component of the mitochondrial ribosome (mitoribosome), a dedicated translation machinery responsible for the synthesis of mitochondrial genome-encoded proteins, including at least some of the essential transmembrane subunits of the mitochondrial respiratory chain. The mitoribosomes are attached to the mitochondrial inner membrane and translation products are cotranslationally integrated into the membrane. The polypeptide is Small ribosomal subunit protein mS33 (rsm27) (Schizosaccharomyces pombe (strain 972 / ATCC 24843) (Fission yeast)).